A 284-amino-acid chain; its full sequence is Bifunctional protein FolD (284 aa).

Residues 165-167 (GAS), isoleucine 190, and isoleucine 231 each bind NADP(+).

The protein belongs to the tetrahydrofolate dehydrogenase/cyclohydrolase family. Homodimer.

The catalysed reaction is (6R)-5,10-methylene-5,6,7,8-tetrahydrofolate + NADP(+) = (6R)-5,10-methenyltetrahydrofolate + NADPH. The enzyme catalyses (6R)-5,10-methenyltetrahydrofolate + H2O = (6R)-10-formyltetrahydrofolate + H(+). Its pathway is one-carbon metabolism; tetrahydrofolate interconversion. Its function is as follows. Catalyzes the oxidation of 5,10-methylenetetrahydrofolate to 5,10-methenyltetrahydrofolate and then the hydrolysis of 5,10-methenyltetrahydrofolate to 10-formyltetrahydrofolate. The protein is Bifunctional protein FolD of Alkaliphilus metalliredigens (strain QYMF).